Here is a 506-residue protein sequence, read N- to C-terminus: SPbeta prophage-derived uncharacterized protein YonE (506 aa).

Residues 473–506 (YTFTGNEVGRPNEGNKNNDNTVKSATSNGNDNPI) form a disordered region. Residues 486 to 506 (GNKNNDNTVKSATSNGNDNPI) show a composition bias toward polar residues.

The polypeptide is SPbeta prophage-derived uncharacterized protein YonE (yonE) (Bacillus subtilis (strain 168)).